We begin with the raw amino-acid sequence, 199 residues long: MAKVLVLYYSAYGHIETMANAVAEGAREAGATVDIKRVPELVPPDVAKASYYKLDQAAPVATIDDLANYDAIIVGTGTRFGRMASQMANFLDQAGGLWAKGALNGKVGGAFTSTATQHGGQETTLFSIITNLLHFGMVVVGLNYGFQGQMTLGEITGGAPYGATTLTGGDGARQPSANELAGARYQGKTIAETAIKLHG.

One can recognise a Flavodoxin-like domain in the interval 4-190; it reads VLVLYYSAYG…AGARYQGKTI (187 aa). Residues 10–15 and 78–80 each bind FMN; these read SAYGHI and TRF. Tyr12 is an NAD(+) binding site. Trp98 is a substrate binding site. Residues 113–119 and His134 contribute to the FMN site; that span reads STATQHG.

Belongs to the WrbA family. It depends on FMN as a cofactor.

It carries out the reaction a quinone + NADH + H(+) = a quinol + NAD(+). The catalysed reaction is a quinone + NADPH + H(+) = a quinol + NADP(+). This is NAD(P)H dehydrogenase (quinone) from Rhodopseudomonas palustris (strain HaA2).